Consider the following 863-residue polypeptide: Neuroligin-1 (863 aa).

The signal sequence occupies residues 1–45; sequence MALPRCTWPNYVWRAVMACLVHRGLGAPLTLCMLGCLLQAGHVLS. Residues 46–717 are Extracellular-facing; it reads QKLDDVDPLV…DQRDYSTELS (672 aa). N-linked (GlcNAc...) (complex) asparagine glycosylation occurs at Asn-109. A disulfide bond links Cys-117 and Cys-153. The tract at residues 183-212 is disordered; it reads KGGPLTKKQTDDLGDNDGAEDEDIRDSGGP. The segment covering 194 to 206 has biased composition (acidic residues); it reads DLGDNDGAEDEDI. Asn-323 and Asn-363 each carry an N-linked (GlcNAc...) (complex) asparagine glycan. 2 disulfide bridges follow: Cys-362-Cys-373 and Cys-532-Cys-566. The N-linked (GlcNAc...) asparagine glycan is linked to Asn-567. Positions 670–708 are disordered; it reads PSTDITFRPTRKNSVPVTSAFPTAKQDDPKQQPSPFSVD. A compositionally biased stretch (polar residues) spans 681 to 690; that stretch reads KNSVPVTSAF. Residues Ser-703 and Ser-706 are each glycosylated (O-linked (GalNAc...) serine). The chain crosses the membrane as a helical span at residues 718 to 738; that stretch reads VTIAVGASLLFLNILAFAALY. At 739–863 the chain is on the cytoplasmic side; it reads YKKDKRRHDV…HPHSHSTTRV (125 aa). The segment at 842 to 863 is disordered; that stretch reads GGQNNTLPHPHPHPHSHSTTRV. The span at 851 to 863 shows a compositional bias: basic residues; the sequence is PHPHPHSHSTTRV.

Belongs to the type-B carboxylesterase/lipase family. As to quaternary structure, interacts with neurexins NRXN1, NRXN2 and NRXN3. Interaction with neurexins is mediated by heparan sulfate glycan modification on neurexin. Interacts with NLGN3. Interacts with AIP1 and PDZRN3. Interacts (via its C-terminus) with DLG4/PSD-95 (via PDZ domain 3). Interacts with GOPC. As to expression, expressed in the blood vessel walls (at protein level). Highly expressed in brain through prenatal stages, and at lower levels in pancreas islet beta cells.

It is found in the cell membrane. Its subcellular location is the postsynaptic density. The protein localises to the synaptic cleft. The protein resides in the synaptic cell membrane. Its function is as follows. Cell surface protein involved in cell-cell-interactions via its interactions with neurexin family members. Plays a role in synapse function and synaptic signal transmission, and probably mediates its effects by recruiting and clustering other synaptic proteins. May promote the initial formation of synapses, but is not essential for this. In vitro, triggers the de novo formation of presynaptic structures. May be involved in specification of excitatory synapses. Required to maintain wakefulness quality and normal synchrony of cerebral cortex activity during wakefulness and sleep. The protein is involved in nervous system development. The sequence is that of Neuroligin-1 (NLGN1) from Homo sapiens (Human).